Here is a 966-residue protein sequence, read N- to C-terminus: Probable LIM domain-containing serine/threonine-protein kinase DDB_G0286997 (966 aa).

2 consecutive LIM zinc-binding domains span residues 3-62 and 63-120; these read SRCG…LNAP and KCFK…KPPP. Disordered stretches follow at residues 208-291 and 331-588; these read YSLS…PTED and PLNQ…EQQV. A compositionally biased stretch (low complexity) spans 211-231; sequence SSPSSSSSSSSSSSSSSSSPP. Positions 232 to 269 are enriched in polar residues; sequence NTFNKSSDFLRNPLNNNVKSSSSSIGGNFVNKSQQQQQ. Composition is skewed to low complexity over residues 270–284 and 331–350; these read PIDS…ISPS and PLNQ…SPNL. Positions 374–389 are enriched in polar residues; it reads TTTFSNPLLKTKNQSF. A compositionally biased stretch (pro residues) spans 419–430; sequence PLPPPPITPIPS. The segment covering 431 to 449 has biased composition (low complexity); it reads PSSSSIIINNQQQQQQESQ. Residues 490–511 show a composition bias toward pro residues; it reads KPIVLPPPPLDMEQLPLPPPPL. Residues 513 to 526 show a composition bias toward polar residues; sequence SSQINQSLKSTQHN. Residues 543 to 560 are compositionally biased toward low complexity; that stretch reads IQKQSIPTRKPQLPQSSN. Residues 561–570 show a composition bias toward pro residues; it reads PSPPSPPSPQ. The Protein kinase domain maps to 702–959; sequence VIFGDVIAAG…DTLKKISESL (258 aa). ATP contacts are provided by residues 708–716 and lysine 729; that span reads IAAGASGKV. The Proton acceptor role is filled by aspartate 825.

It belongs to the protein kinase superfamily. TKL Ser/Thr protein kinase family.

The catalysed reaction is L-seryl-[protein] + ATP = O-phospho-L-seryl-[protein] + ADP + H(+). The enzyme catalyses L-threonyl-[protein] + ATP = O-phospho-L-threonyl-[protein] + ADP + H(+). The chain is Probable LIM domain-containing serine/threonine-protein kinase DDB_G0286997 from Dictyostelium discoideum (Social amoeba).